The primary structure comprises 298 residues: Cholesterol 25-hydroxylase (298 aa).

The N-linked (GlcNAc...) asparagine glycan is linked to Asn-5. 3 helical membrane passes run 38–58 (FFPV…FVVL), 84–104 (LLPC…PVTL), and 124–144 (LLSH…AWHL). The 136-residue stretch at 128–263 (VLICLLLFDT…FTHWDKMLGT (136 aa)) folds into the Fatty acid hydroxylase domain. Positions 142–146 (WHLLH) match the Histidine box-1 motif. Residues 157-161 (HKVHH) carry the Histidine box-2 motif. Asn-163 carries N-linked (GlcNAc...) asparagine glycosylation. A run of 2 helical transmembrane segments spans residues 167-187 (FALA…FFDV) and 190-210 (VAML…NIWL). A Histidine box-3 motif is present at residues 238–244 (HHDLHHS).

This sequence belongs to the sterol desaturase family. Requires Fe cation as cofactor. In terms of processing, N-glycosylated. Expressed in testicular macrophages at all stages, with the highest level in 10 day old animals.

The protein localises to the endoplasmic reticulum membrane. The catalysed reaction is cholesterol + AH2 + O2 = 25-hydroxycholesterol + A + H2O. It catalyses the reaction cholesterol + NADPH + O2 + H(+) = 25-hydroxycholesterol + NADP(+) + H2O. In terms of biological role, catalyzes the formation of 25-hydroxycholesterol from cholesterol, leading to repress cholesterol biosynthetic enzymes. Plays a key role in cell positioning and movement in lymphoid tissues: 25-hydroxycholesterol is an intermediate in biosynthesis of 7-alpha,25-dihydroxycholesterol (7-alpha,25-OHC), an oxysterol that acts as a ligand for the G protein-coupled receptor GPR183/EBI2, a chemotactic receptor for a number of lymphoid cells. May play an important role in regulating lipid metabolism by synthesizing a corepressor that blocks sterol regulatory element binding protein (SREBP) processing. In testis, production of 25-hydroxycholesterol by macrophages plays a role in Leydig cell differentiation. Required to restrain inflammation in macrophages: production of 25-hydroxycholesterol protects macrophages from cholesterol overload, thereby preventing mitochondrial DNA release and subsequent activation of the AIM2 inflammasome. Interferon-stimulated gene which has broad antiviral activities against a wide range of enveloped viruses. Its function is as follows. Catalyzes the formation of 25-hydroxycholesterol from cholesterol, leading to repress cholesterol biosynthetic enzymes. Plays a key role in cell positioning and movement in lymphoid tissues: 25-hydroxycholesterol is an intermediate in biosynthesis of 7-alpha,25-dihydroxycholesterol (7-alpha,25-OHC), an oxysterol that acts as a ligand for the G protein-coupled receptor GPR183/EBI2, a chemotactic receptor for a number of lymphoid cells. May play an important role in regulating lipid metabolism by synthesizing a corepressor that blocks sterol regulatory element binding protein (SREBP) processing. As an interferon-stimulated gene, has broad antiviral activities against a wide range of enveloped viruses. Its product, 25-hydroxycholesterol, activates the ER-localized enzyme ACAT to induce internalization of accessible cholesterol on the plasma membrane and restricts virus-host membranes fusion which inhibits virus replication. In testis, production of 25-hydroxycholesterol by macrophages plays a role in Leydig cell differentiation. The sequence is that of Cholesterol 25-hydroxylase from Rattus norvegicus (Rat).